Here is a 554-residue protein sequence, read N- to C-terminus: Carboxypeptidase Y homolog A (554 aa).

The signal sequence occupies residues 1 to 17 (MRISASTVLLGAASAAS). Positions 18–137 (AASFQNQAQH…QLDNFNLRVK (120 aa)) are excised as a propeptide. 5 cysteine pairs are disulfide-bonded: Cys-191–Cys-431, Cys-325–Cys-339, Cys-349–Cys-372, Cys-356–Cys-365, and Cys-394–Cys-401. Residue Asn-222 is glycosylated (N-linked (GlcNAc...) asparagine). Ser-278 is an active-site residue. The active site involves Asp-470. A glycan (N-linked (GlcNAc...) asparagine) is linked at Asn-518. His-529 is a catalytic residue.

This sequence belongs to the peptidase S10 family.

It localises to the vacuole. It catalyses the reaction Release of a C-terminal amino acid with broad specificity.. Its function is as follows. Vacuolar carboxypeptidase involved in degradation of small peptides. Digests preferentially peptides containing an aliphatic or hydrophobic residue in P1' position, as well as methionine, leucine or phenylalanine in P1 position of ester substrate. This Neurospora crassa (strain ATCC 24698 / 74-OR23-1A / CBS 708.71 / DSM 1257 / FGSC 987) protein is Carboxypeptidase Y homolog A (cpyA).